A 690-amino-acid chain; its full sequence is uncharacterized protein (690 aa).

This sequence to M.genitalium MG366 and M.pneumoniae MPN544.

This is an uncharacterized protein from Ureaplasma parvum serovar 3 (strain ATCC 700970).